The following is a 298-amino-acid chain: ER-bound oxygenase mpaB (298 aa).

Over 1–24 the chain is Lumenal; that stretch reads MDKGTSFFTTPSFSATTRAIFNTM. The helical transmembrane segment at 25–45 threads the bilayer; sequence PQWFSFAVGLLIAYPLLINSL. At 46–298 the chain is on the cytoplasmic side; the sequence is RYRRLKQLQK…RLRKAMLYVE (253 aa).

This sequence belongs to the mpaB oxygenase family.

Its subcellular location is the endoplasmic reticulum membrane. It carries out the reaction 4-farnesyl-3,5-dihydroxy-6-methylphthalide + AH2 + 2 O2 = (4E,8E)-10-(4,6-dihydroxy-7-methyl-3-oxo-1,3-dihydro-2-benzofuran-5-yl)-4,8-dimethyldeca-4,8-dienoate + acetone + A + H2O + H(+). The protein operates within secondary metabolite biosynthesis; terpenoid biosynthesis. In terms of biological role, ER-bound oxygenase; part of the gene cluster that mediates the biosynthesis of mycophenolic acid (MPA), the first isolated antibiotic natural product in the world obtained from a culture of Penicillium brevicompactum in 1893. MpaB catalyzes the oxidative cleavage the C19-C20 double bond in farnesyl-DHMP (FDHMP) to yield FDHMP-3C via a mycophenolic aldehyde intermediate. The first step of the pathway is the synthesis of 5-methylorsellinic acid (5MOA) by the cytosolic polyketide synthase mpaC. 5MOA is then converted to the phthalide compound 5,7-dihydroxy-4,6-dimethylphthalide (DHMP) by the endoplasmic reticulum-bound cytochrome P450 monooxygenase mpaDE. MpaDE first catalyzes hydroxylation of 5-MOA to 4,6-dihydroxy-2-(hydroxymethyl)-3-methylbenzoic acid (DHMB). MpaDE then acts as a lactone synthase that catalyzes the ring closure to convert DHMB into DHMP. The next step is the prenylation of DHMP by the Golgi apparatus-associated prenyltransferase mpaA to yield farnesyl-DHMP (FDHMP). The ER-bound oxygenase mpaB then mediates the oxidative cleavage the C19-C20 double bond in FDHMP to yield FDHMP-3C via a mycophenolic aldehyde intermediate. The O-methyltransferase mpaG catalyzes the methylation of FDHMP-3C to yield MFDHMP-3C. After the cytosolic methylation of FDHMP-3C, MFDHMP-3C enters into peroxisomes probably via free diffusion due to its low molecular weight. Upon a peroxisomal CoA ligation reaction, catalyzed by a beta-oxidation component enzyme acyl-CoA ligase ACL891, MFDHMP-3C-CoA would then be restricted to peroxisomes for the following beta-oxidation pathway steps. The peroxisomal beta-oxidation machinery than converts MFDHMP-3C-CoA into MPA_CoA, via a beta-oxidation chain-shortening process. Finally mpaH acts as a peroxisomal acyl-CoA hydrolase with high substrate specificity toward MPA-CoA to release the final product MPA. The protein is ER-bound oxygenase mpaB of Penicillium roqueforti (strain FM164).